Consider the following 1076-residue polypeptide: GPI inositol-deacylase A (1076 aa).

A helical membrane pass occupies residues 3–23 (IATFPALAITALALVLWATVA). 2 N-linked (GlcNAc...) asparagine glycosylation sites follow: Asn-48 and Asn-119. Residue Ser-240 is part of the active site. Residue Asn-404 is glycosylated (N-linked (GlcNAc...) asparagine). A run of 2 helical transmembrane segments spans residues 765–785 (FLGF…LCLL) and 815–835 (WILA…SLLY). Asn-849 carries an N-linked (GlcNAc...) asparagine glycan. Helical transmembrane passes span 855–875 (FLGP…HWLL), 877–897 (ILTL…IAPE), and 910–930 (FLLL…VAVL). Asn-952 and Asn-966 each carry an N-linked (GlcNAc...) asparagine glycan. 3 helical membrane passes run 970 to 990 (SLLL…VVWL), 1006 to 1026 (EVSA…GIMI), and 1035 to 1055 (IYAT…HGVV).

It belongs to the GPI inositol-deacylase family.

The protein resides in the endoplasmic reticulum membrane. In terms of biological role, involved in inositol deacylation of GPI-anchored proteins which plays important roles in the quality control and ER-associated degradation of GPI-anchored proteins. The chain is GPI inositol-deacylase A (BST1A) from Yarrowia lipolytica (strain CLIB 122 / E 150) (Yeast).